A 298-amino-acid chain; its full sequence is ATP synthase gamma chain (298 aa).

It belongs to the ATPase gamma chain family. F-type ATPases have 2 components, CF(1) - the catalytic core - and CF(0) - the membrane proton channel. CF(1) has five subunits: alpha(3), beta(3), gamma(1), delta(1), epsilon(1). CF(0) has three main subunits: a, b and c.

The protein localises to the cell inner membrane. Produces ATP from ADP in the presence of a proton gradient across the membrane. The gamma chain is believed to be important in regulating ATPase activity and the flow of protons through the CF(0) complex. In Francisella tularensis subsp. mediasiatica (strain FSC147), this protein is ATP synthase gamma chain.